Consider the following 324-residue polypeptide: Aprataxin (324 aa).

In terms of domain architecture, FHA-like spans 23–72 (SVTLGRGPDTKIKDKKCSREQVELRADCNRGFVTVKQLGVNPTLVDDVVV). The tract at residues 100–160 (TEDTSRSKPS…QGLKASMQDP (61 aa)) is disordered. Residues 111 to 125 (RAQQIQSPTKTTADV) are compositionally biased toward polar residues. In terms of domain architecture, HIT spans 150-255 (SQGLKASMQD…ISQDFDSPCL (106 aa)). Interaction with DNA substrate stretches follow at residues 175 to 179 (DKYPK) and 237 to 238 (SM). Residues 240–244 (HVHLH) carry the Histidine triad motif motif. Catalysis depends on His242, which acts as the Tele-AMP-histidine intermediate. The C2H2-type zinc-finger motif lies at 299 to 321 (LRCHVCGKEQTTIPKLKDHLKTH).

The protein resides in the nucleus. The protein localises to the nucleoplasm. It localises to the nucleolus. The enzyme catalyses a 5'-end adenosine-5'-diphospho-5'-2'-deoxyribonucleoside-DNA + H2O = a 5'-end 5'-phospho-2'-deoxyribonucleoside-DNA + AMP + 2 H(+). It catalyses the reaction a 5'-end adenosine-5'-diphospho-5'-ribonucleoside-2'-deoxyribonucleotide-DNA + H2O = a 5'-end 5'-phospho-ribonucleoside-2'-deoxyribonucleotide-DNA + AMP + 2 H(+). It carries out the reaction a 3'-end 2'-deoxyribonucleotide-3'-diphospho-5'-guanosine-DNA + H2O = a 3'-end 2'-deoxyribonucleotide 3'-phosphate-DNA + GMP + 2 H(+). Its function is as follows. DNA-binding protein involved in single-strand DNA break repair, double-strand DNA break repair and base excision repair. Resolves abortive DNA ligation intermediates formed either at base excision sites, or when DNA ligases attempt to repair non-ligatable breaks induced by reactive oxygen species. Catalyzes the release of adenylate groups covalently linked to 5'-phosphate termini, resulting in the production of 5'-phosphate termini that can be efficiently rejoined. Also able to hydrolyze adenosine 5'-monophosphoramidate (AMP-NH(2)) and diadenosine tetraphosphate (AppppA), but with lower catalytic activity. Likewise, catalyzes the release of 3'-linked guanosine (DNAppG) and inosine (DNAppI) from DNA, but has higher specific activity with 5'-linked adenosine (AppDNA). The sequence is that of Aprataxin (aptx) from Danio rerio (Zebrafish).